Consider the following 218-residue polypeptide: Hypoxanthine-guanine phosphoribosyltransferase (218 aa).

Residues Lys69, 134 to 142, Lys166, 186 to 188, and Asp194 each bind GMP; these read EDIIDTGKT and KFV. The active-site Proton acceptor is the Asp138. Position 194 (Asp194) interacts with Mg(2+).

It belongs to the purine/pyrimidine phosphoribosyltransferase family. As to quaternary structure, homotetramer. Requires Mg(2+) as cofactor.

The protein resides in the cytoplasm. It catalyses the reaction IMP + diphosphate = hypoxanthine + 5-phospho-alpha-D-ribose 1-diphosphate. It carries out the reaction GMP + diphosphate = guanine + 5-phospho-alpha-D-ribose 1-diphosphate. It participates in purine metabolism; IMP biosynthesis via salvage pathway; IMP from hypoxanthine: step 1/1. Its function is as follows. Converts guanine to guanosine monophosphate, and hypoxanthine to inosine monophosphate. Transfers the 5-phosphoribosyl group from 5-phosphoribosylpyrophosphate onto the purine. Plays a central role in the generation of purine nucleotides through the purine salvage pathway. The polypeptide is Hypoxanthine-guanine phosphoribosyltransferase (HPRT1) (Gallus gallus (Chicken)).